A 694-amino-acid polypeptide reads, in one-letter code: Voltage-gated chloride channel TMC4 (694 aa).

A disordered region spans residues 1–21 (MEAWGQSPACSSSRKARTGPS). Topologically, residues 1–150 (MEAWGQSPAC…GTESYFSLLR (150 aa)) are extracellular. A helical transmembrane segment spans residues 151 to 171 (FLLFLNLVASVIEICMKLIPT). Topologically, residues 172-231 (WLEGAPPGPPGPNISSPCGSYIPHTHGLVAFPTQLFNLLSGEGYLEWSPLFYGFYPPRSN) are cytoplasmic. Residues 232 to 252 (LAITYLCSVFAISVIYLLCIL) form a helical membrane-spanning segment. Topologically, residues 253-330 (RRSVSGLKET…SQRAKVWSMR (78 aa)) are extracellular. The chain crosses the membrane as a helical span at residues 331-351 (ALLNVLVLALLGAAFYGIYWA). Over 352 to 376 (TEYTLTLQETPLVRQTPLFKLLVDY) the chain is Cytoplasmic. A helical membrane pass occupies residues 377 to 397 (LPSIFISLFNFVLPPVFKFIA). Over 398–407 (SLEGYTQSRQ) the chain is Extracellular. Residues 408–428 (IVLILLRTVFLRLASLVFLLV) traverse the membrane as a helical segment. Residues 429 to 465 (SLWSQITCGGNMEAEGCKACGYNYKEIPCWETRLGQE) are Cytoplasmic-facing. Residues 466–486 (MYKLVLFDLLMGLLVTLLVQF) traverse the membrane as a helical segment. At 487-513 (PRKILCGLCPGALGRLSGTLEFQVPDE) the chain is on the extracellular side. The helical transmembrane segment at 514–534 (VLGLIYAQTVVWVGSFFCPLL) threads the bilayer. Position 535 (proline 535) is a topological domain, cytoplasmic. The helical transmembrane segment at 536–556 (LINTAKFLILFCLKKITLFSI) threads the bilayer. Residues 557 to 574 (YSPASRTFRASTANFFFP) lie on the Extracellular side of the membrane. The chain crosses the membrane as a helical span at residues 575-595 (LVLLVGLAISAVPVLYSIFLI). Topologically, residues 596-635 (PPSKLCGPFRGKLSIWAQIPEAIESLPQTAQNFLYFLGTQ) are cytoplasmic. A helical membrane pass occupies residues 636 to 656 (AFTVPLLILSSILMMYTVALA). Topologically, residues 657–694 (NCYGRLISELKRQIETEVQNKVFLAQRAVALSSRNGTS) are extracellular. N-linked (GlcNAc...) asparagine glycosylation is present at asparagine 691.

It belongs to the TMC family. In terms of tissue distribution, expressed in taste bud cells of the posterior tongue. Ubiquitously expressed.

Its subcellular location is the membrane. It carries out the reaction chloride(in) = chloride(out). Its function is as follows. Voltage-gated chloride channel involved in high-concentration salt taste sensation. Depolarization induced by high NaCl concentration may trigger the activation of TMC4-mediated chloride influx into taste bud cells, helping the return to resting potential. Also allows permeation of organic anions including gluconate, but their current amplitudes at positive potentials are less than that of chloride. Involved in pH and temperature-dependent modulation of salty taste. The protein is Voltage-gated chloride channel TMC4 of Mus musculus (Mouse).